Here is an 804-residue protein sequence, read N- to C-terminus: Leucine--tRNA ligase (804 aa).

The 'HIGH' region signature appears at 40–51 (PYPSGAGLHVGH). The 'KMSKS' region motif lies at 576 to 580 (KMSKS). Residue Lys-579 participates in ATP binding.

The protein belongs to the class-I aminoacyl-tRNA synthetase family.

The protein localises to the cytoplasm. It catalyses the reaction tRNA(Leu) + L-leucine + ATP = L-leucyl-tRNA(Leu) + AMP + diphosphate. This chain is Leucine--tRNA ligase, found in Bacillus subtilis (strain 168).